Reading from the N-terminus, the 265-residue chain is Sulfur carrier protein FdhD (265 aa).

Residue Cys107 is the Cysteine persulfide intermediate of the active site.

This sequence belongs to the FdhD family.

The protein localises to the cytoplasm. Required for formate dehydrogenase (FDH) activity. Acts as a sulfur carrier protein that transfers sulfur from IscS to the molybdenum cofactor prior to its insertion into FDH. This chain is Sulfur carrier protein FdhD, found in Staphylococcus aureus (strain JH9).